Reading from the N-terminus, the 383-residue chain is Probable arabinan endo-1,5-alpha-L-arabinosidase D (383 aa).

A signal peptide spans Met-1–Ala-22. Asp-49 functions as the Proton acceptor in the catalytic mechanism. Residues Asn-75, Asn-163, and Asn-206 are each glycosylated (N-linked (GlcNAc...) asparagine). Residue Glu-227 is the Proton donor of the active site. N-linked (GlcNAc...) asparagine glycosylation is present at Asn-325. Asn-356 is lipidated: GPI-anchor amidated asparagine. Residues Pro-357 to Leu-383 constitute a propeptide, removed in mature form.

Belongs to the glycosyl hydrolase 43 family.

The protein localises to the cell membrane. It catalyses the reaction Endohydrolysis of (1-&gt;5)-alpha-arabinofuranosidic linkages in (1-&gt;5)-arabinans.. The protein operates within glycan metabolism; L-arabinan degradation. In terms of biological role, endo-1,5-alpha-L-arabinanase involved in degradation of pectin. Its preferred substrate is linear 1,5-alpha-L-arabinan. The polypeptide is Probable arabinan endo-1,5-alpha-L-arabinosidase D (abnD) (Emericella nidulans (strain FGSC A4 / ATCC 38163 / CBS 112.46 / NRRL 194 / M139) (Aspergillus nidulans)).